The sequence spans 132 residues: Small ribosomal subunit protein uS8 (132 aa).

This sequence belongs to the universal ribosomal protein uS8 family. Part of the 30S ribosomal subunit. Contacts proteins S5 and S12.

In terms of biological role, one of the primary rRNA binding proteins, it binds directly to 16S rRNA central domain where it helps coordinate assembly of the platform of the 30S subunit. This Levilactobacillus brevis (strain ATCC 367 / BCRC 12310 / CIP 105137 / JCM 1170 / LMG 11437 / NCIMB 947 / NCTC 947) (Lactobacillus brevis) protein is Small ribosomal subunit protein uS8.